We begin with the raw amino-acid sequence, 298 residues long: MQLEKMITEGSNAASAEIDRVSTLEMCRIINDEDKTVPLAVERVLPDIAAAIDVIHAQVSGGGRLIYLGAGTSGRLGILDASECPPTYGVKPGLVVGLIAGGEYAIQHAVEGAEDSREGGINDLKNIGLTAQDVVVGIAASGRTPYVIAGLEYARQLGCRTVGISCNPGSAVSTTAEFAITPVVGAEVVTGSSRMKAGTAQKLVLNMLSTGLMIKSGKVFGNLMVDVVATNEKLHVRQVNIVKNATGCNAEQAEAALIACERNCKTAIVMVLKNLDAAEAKKRLDQHGGFIRQVLDKE.

The SIS domain occupies I55 to K218. The Proton donor role is filled by E83. E114 is a catalytic residue.

It belongs to the GCKR-like family. MurNAc-6-P etherase subfamily. In terms of assembly, homodimer.

It carries out the reaction N-acetyl-D-muramate 6-phosphate + H2O = N-acetyl-D-glucosamine 6-phosphate + (R)-lactate. It participates in amino-sugar metabolism; 1,6-anhydro-N-acetylmuramate degradation. The protein operates within amino-sugar metabolism; N-acetylmuramate degradation. Its pathway is cell wall biogenesis; peptidoglycan recycling. Specifically catalyzes the cleavage of the D-lactyl ether substituent of MurNAc 6-phosphate, producing GlcNAc 6-phosphate and D-lactate. Together with AnmK, is also required for the utilization of anhydro-N-acetylmuramic acid (anhMurNAc) either imported from the medium or derived from its own cell wall murein, and thus plays a role in cell wall recycling. The protein is N-acetylmuramic acid 6-phosphate etherase of Shigella dysenteriae serotype 1 (strain Sd197).